A 171-amino-acid polypeptide reads, in one-letter code: S-ribosylhomocysteine lyase (171 aa).

Fe cation contacts are provided by H54, H58, and C128.

This sequence belongs to the LuxS family. Homodimer. Fe cation is required as a cofactor.

The enzyme catalyses S-(5-deoxy-D-ribos-5-yl)-L-homocysteine = (S)-4,5-dihydroxypentane-2,3-dione + L-homocysteine. Functionally, involved in the synthesis of autoinducer 2 (AI-2) which is secreted by bacteria and is used to communicate both the cell density and the metabolic potential of the environment. The regulation of gene expression in response to changes in cell density is called quorum sensing. Catalyzes the transformation of S-ribosylhomocysteine (RHC) to homocysteine (HC) and 4,5-dihydroxy-2,3-pentadione (DPD). In Escherichia coli O157:H7, this protein is S-ribosylhomocysteine lyase.